A 220-amino-acid chain; its full sequence is Glycerol-3-phosphate acyltransferase (220 aa).

Helical transmembrane passes span 11–31 (INVI…GYAL), 70–90 (LLVL…SKLF), 96–116 (LQWM…FLNF), 127–147 (GSVV…WFFV), 153–173 (ISSL…FFVP), and 193–213 (MVLI…NLLA).

The protein belongs to the PlsY family. As to quaternary structure, probably interacts with PlsX.

Its subcellular location is the cell inner membrane. It catalyses the reaction an acyl phosphate + sn-glycerol 3-phosphate = a 1-acyl-sn-glycero-3-phosphate + phosphate. It functions in the pathway lipid metabolism; phospholipid metabolism. Its function is as follows. Catalyzes the transfer of an acyl group from acyl-phosphate (acyl-PO(4)) to glycerol-3-phosphate (G3P) to form lysophosphatidic acid (LPA). This enzyme utilizes acyl-phosphate as fatty acyl donor, but not acyl-CoA or acyl-ACP. The chain is Glycerol-3-phosphate acyltransferase from Helicobacter pylori (strain HPAG1).